Reading from the N-terminus, the 105-residue chain is Urease subunit beta (105 aa).

This sequence belongs to the urease beta subunit family. As to quaternary structure, heterotrimer of UreA (gamma), UreB (beta) and UreC (alpha) subunits. Three heterotrimers associate to form the active enzyme.

The protein resides in the cytoplasm. It catalyses the reaction urea + 2 H2O + H(+) = hydrogencarbonate + 2 NH4(+). The protein operates within nitrogen metabolism; urea degradation; CO(2) and NH(3) from urea (urease route): step 1/1. This Shewanella halifaxensis (strain HAW-EB4) protein is Urease subunit beta.